The sequence spans 130 residues: Vascular-related unknown protein 3 (130 aa).

Residues 45–81 form a disordered region; sequence DDSSMMSDAASPMGCVEEDTASSPSNRTEGYSGMEDN.

In terms of biological role, involved in the regulation of plant growth. The protein is Vascular-related unknown protein 3 of Arabidopsis thaliana (Mouse-ear cress).